The sequence spans 348 residues: GTPase Obg (348 aa).

Residues 1–159 (MKFLDLAKVY…RTIWLRLKLI (159 aa)) form the Obg domain. The region spanning 160–327 (ADAGLLGLPN…VLRAVRAEID (168 aa)) is the OBG-type G domain. GTP is bound by residues 166–173 (GLPNAGKS), 191–195 (FTTLH), 212–215 (DIPG), 279–282 (NKID), and 308–310 (SSV). S173 and T193 together coordinate Mg(2+).

This sequence belongs to the TRAFAC class OBG-HflX-like GTPase superfamily. OBG GTPase family. Monomer. The cofactor is Mg(2+).

The protein localises to the cytoplasm. In terms of biological role, an essential GTPase which binds GTP, GDP and possibly (p)ppGpp with moderate affinity, with high nucleotide exchange rates and a fairly low GTP hydrolysis rate. Plays a role in control of the cell cycle, stress response, ribosome biogenesis and in those bacteria that undergo differentiation, in morphogenesis control. In Ruegeria sp. (strain TM1040) (Silicibacter sp.), this protein is GTPase Obg.